The following is a 197-amino-acid chain: Imidazoleglycerol-phosphate dehydratase (197 aa).

Belongs to the imidazoleglycerol-phosphate dehydratase family.

The protein resides in the cytoplasm. It carries out the reaction D-erythro-1-(imidazol-4-yl)glycerol 3-phosphate = 3-(imidazol-4-yl)-2-oxopropyl phosphate + H2O. The protein operates within amino-acid biosynthesis; L-histidine biosynthesis; L-histidine from 5-phospho-alpha-D-ribose 1-diphosphate: step 6/9. The chain is Imidazoleglycerol-phosphate dehydratase from Chromobacterium violaceum (strain ATCC 12472 / DSM 30191 / JCM 1249 / CCUG 213 / NBRC 12614 / NCIMB 9131 / NCTC 9757 / MK).